The primary structure comprises 354 residues: tRNA N6-adenosine threonylcarbamoyltransferase (354 aa).

Residues H115 and H119 each contribute to the Fe cation site. Residues 138-142 (LVSGG), D171, G184, and N276 each bind substrate. D304 contributes to the Fe cation binding site.

The protein belongs to the KAE1 / TsaD family. Fe(2+) serves as cofactor.

Its subcellular location is the cytoplasm. It catalyses the reaction L-threonylcarbamoyladenylate + adenosine(37) in tRNA = N(6)-L-threonylcarbamoyladenosine(37) in tRNA + AMP + H(+). Required for the formation of a threonylcarbamoyl group on adenosine at position 37 (t(6)A37) in tRNAs that read codons beginning with adenine. Is involved in the transfer of the threonylcarbamoyl moiety of threonylcarbamoyl-AMP (TC-AMP) to the N6 group of A37, together with TsaE and TsaB. TsaD likely plays a direct catalytic role in this reaction. The protein is tRNA N6-adenosine threonylcarbamoyltransferase of Xanthomonas campestris pv. campestris (strain 8004).